The chain runs to 371 residues: Enterobactin C-glucosyltransferase (371 aa).

This sequence belongs to the glycosyltransferase 28 family.

The protein localises to the cytoplasm. The catalysed reaction is enterobactin + UDP-alpha-D-glucose = monoglucosyl-enterobactin + UDP. It catalyses the reaction monoglucosyl-enterobactin + UDP-alpha-D-glucose = diglucosyl-enterobactin + UDP + H(+). The enzyme catalyses diglucosyl-enterobactin + UDP-alpha-D-glucose = triglucosyl-enterobactin + UDP + H(+). It functions in the pathway siderophore biosynthesis; enterobactin biosynthesis. Catalyzes the successive monoglucosylation, diglucosylation and triglucosylation of enterobactin (Ent). Transfers glucosyl groups from uridine-5'-diphosphoglucose (UDP-Glc) to C5 of one, two or three of the 2,3-dihydroxybenzoyl (DHB) units of Ent to yield monoglucosyl-C-Ent (MGE), diglucosyl-C-Ent (DGE) and triglucosyl-C-Ent (TGE). Glucosylation decreases the membrane affinity of Ent and increases the iron acquisition rate. The polypeptide is Enterobactin C-glucosyltransferase (Escherichia coli O6:H1 (strain CFT073 / ATCC 700928 / UPEC)).